The sequence spans 265 residues: GTP cyclohydrolase FolE2 (265 aa).

This sequence belongs to the GTP cyclohydrolase IV family.

The enzyme catalyses GTP + H2O = 7,8-dihydroneopterin 3'-triphosphate + formate + H(+). The protein operates within cofactor biosynthesis; 7,8-dihydroneopterin triphosphate biosynthesis; 7,8-dihydroneopterin triphosphate from GTP: step 1/1. In terms of biological role, converts GTP to 7,8-dihydroneopterin triphosphate. This chain is GTP cyclohydrolase FolE2, found in Bordetella petrii (strain ATCC BAA-461 / DSM 12804 / CCUG 43448).